Reading from the N-terminus, the 1755-residue chain is Transposon Ty1-ML2 Gag-Pol polyprotein (1755 aa).

Residues 1 to 16 (MESQQLSQHSHISHGS) are compositionally biased toward low complexity. 3 disordered regions span residues 1-93 (MESQ…MMTQ), 126-173 (PQSQ…RPPP), and 352-421 (GSRN…SKST). 2 stretches are compositionally biased toward polar residues: residues 48–60 (TKAN…TPAS) and 127–152 (QSQF…GNTF). Over residues 153-165 (TDSSSADSDMTST) the composition is skewed to low complexity. The tract at residues 299–401 (NNGIHINNKV…NSKSKTARAH (103 aa)) is RNA-binding. The segment covering 402 to 418 (NVSTSNNSPSTDNDSIS) has biased composition (low complexity). At Ser-416 the chain carries Phosphoserine. The For protease activity; shared with dimeric partner role is filled by Asp-461. The interval 583–640 (NVHTSESTRKYPYPFIHRMLAHANAQTIRYSLKNNTITYFNESDVDRSSAIDYQCPDC) is integrase-type zinc finger-like. Residues 660–835 (NSYEPFQYLH…AGLDISTLLP (176 aa)) form the Integrase catalytic domain. 2 residues coordinate Mg(2+): Asp-671 and Asp-736. 3 disordered regions span residues 956 to 1087 (SKAV…ETEK), 1092 to 1111 (RSPS…NIVP), and 1130 to 1171 (DLPL…DSNA). A compositionally biased stretch (low complexity) spans 960 to 969 (SPTDSTPPST). The segment covering 1005–1015 (STPQISNIEST) has biased composition (polar residues). Residues 1038-1053 (ESSHASKSKDFRHSDS) show a composition bias toward basic and acidic residues. 2 stretches are compositionally biased toward polar residues: residues 1054–1082 (YSEN…QISD) and 1101–1111 (PENNSSHNIVP). The Bipartite nuclear localization signal signature appears at 1178–1212 (KKRSLEDNETEIKVSRDTWNTKNMRSLEPPRSKKR). The Reverse transcriptase Ty1/copia-type domain occupies 1338 to 1476 (NNYYITQLDI…DILGLEIKYQ (139 aa)). 6 residues coordinate Mg(2+): Asp-1346, Asp-1427, Asp-1428, Asp-1610, Glu-1652, and Asp-1685. Residues 1610 to 1752 (DASYGNQPYY…IKTFKLLTNK (143 aa)) enclose the RNase H Ty1/copia-type domain.

In terms of assembly, the capsid protein forms a homotrimer, from which the VLPs are assembled. The protease is a homodimer, whose active site consists of two apposed aspartic acid residues. In terms of processing, initially, virus-like particles (VLPs) are composed of the structural unprocessed proteins Gag and Gag-Pol, and also contain the host initiator methionine tRNA (tRNA(i)-Met) which serves as a primer for minus-strand DNA synthesis, and a dimer of genomic Ty RNA. Processing of the polyproteins occurs within the particle and proceeds by an ordered pathway, called maturation. First, the protease (PR) is released by autocatalytic cleavage of the Gag-Pol polyprotein yielding capsid protein p45 and a Pol-p154 precursor protein. This cleavage is a prerequisite for subsequent processing of Pol-p154 at the remaining sites to release the mature structural and catalytic proteins. Maturation takes place prior to the RT reaction and is required to produce transposition-competent VLPs.

The protein localises to the cytoplasm. It is found in the nucleus. It carries out the reaction DNA(n) + a 2'-deoxyribonucleoside 5'-triphosphate = DNA(n+1) + diphosphate. The catalysed reaction is Endonucleolytic cleavage to 5'-phosphomonoester.. Its function is as follows. Capsid protein (CA) is the structural component of the virus-like particle (VLP), forming the shell that encapsulates the retrotransposons dimeric RNA genome. The particles are assembled from trimer-clustered units and there are holes in the capsid shells that allow for the diffusion of macromolecules. CA also has nucleocapsid-like chaperone activity, promoting primer tRNA(i)-Met annealing to the multipartite primer-binding site (PBS), dimerization of Ty1 RNA and initiation of reverse transcription. The aspartyl protease (PR) mediates the proteolytic cleavages of the Gag and Gag-Pol polyproteins after assembly of the VLP. In terms of biological role, reverse transcriptase/ribonuclease H (RT) is a multifunctional enzyme that catalyzes the conversion of the retro-elements RNA genome into dsDNA within the VLP. The enzyme displays a DNA polymerase activity that can copy either DNA or RNA templates, and a ribonuclease H (RNase H) activity that cleaves the RNA strand of RNA-DNA heteroduplexes during plus-strand synthesis and hydrolyzes RNA primers. The conversion leads to a linear dsDNA copy of the retrotransposon that includes long terminal repeats (LTRs) at both ends. Functionally, integrase (IN) targets the VLP to the nucleus, where a subparticle preintegration complex (PIC) containing at least integrase and the newly synthesized dsDNA copy of the retrotransposon must transit the nuclear membrane. Once in the nucleus, integrase performs the integration of the dsDNA into the host genome. This is Transposon Ty1-ML2 Gag-Pol polyprotein (TY1B-ML2) from Saccharomyces cerevisiae (strain ATCC 204508 / S288c) (Baker's yeast).